The primary structure comprises 539 residues: Acrosin-binding protein (539 aa).

An N-terminal signal peptide occupies residues 1 to 25; it reads MRQLAAGSLLSLLKVLLLPLAPAPA. Positions 26-106 are pro-ACR binding; sequence QDANSASTPG…ASWFESFCQF (81 aa). Positions 26-269 are cleaved as a propeptide — removed in active form; sequence QDANSASTPG…NPFSFTPRVR (244 aa). A disordered region spans residues 186 to 259; sequence LGGQEQGQEH…PKFQSEFVSS (74 aa). The segment covering 192–211 has biased composition (basic and acidic residues); the sequence is GQEHKQEHKQEQGQEHKQDE. The segment covering 212 to 238 has biased composition (acidic residues); that stretch reads GQEQEEQEEEQEEEGKQEEGQGTEESL. The segment at 315–423 is pro-ACR binding; sequence LPHVDALLVL…TQIGTLKSGR (109 aa).

As to quaternary structure, binds specifically to the 55- and 53-kDa proacrosins and the 49-kDa acrosin intermediate, but is not capable of binding 43-kDa acrosin intermediate and 32-kDa mature acrosin. In terms of processing, the N-terminus is blocked. Post-translationally, synthesized as a 60-kDa precursor, the 35-kDa mature form is post-translationally produced by the removal of the N-terminal half of the precursor during sperm maturation in the testis and/or epididymis. Phosphorylated on Tyr residues in capacitated sperm. As to expression, specifically expressed in testis.

The protein localises to the secreted. Its subcellular location is the cytoplasmic vesicle. The protein resides in the secretory vesicle. It is found in the acrosome. In terms of biological role, acrosomal protein that maintains proacrosin (pro-ACR) as an enzymatically inactive zymogen in the acrosome. Involved also in the acrosome formation. This is Acrosin-binding protein from Sus scrofa (Pig).